The primary structure comprises 1041 residues: FHIP family protein CG3558 (1041 aa).

A Phosphoserine modification is found at serine 490. Disordered stretches follow at residues 619 to 648 (RPADEESEATDTTVATTASEADMDHNSSSL), 792 to 818 (KGNEGSPMHHSQQQQMVTNSGQQQGQL), 858 to 879 (SMFSRKSASTSTAPPNGSSASS), 903 to 947 (DGRG…SNSS), and 959 to 986 (SNTTTHSASTLHGLDGGPSTGGFNSEPA). Polar residues predominate over residues 628-637 (TDTTVATTAS). Serine 797 is subject to Phosphoserine. Residues 800-818 (HHSQQQQMVTNSGQQQGQL) are compositionally biased toward polar residues. Positions 903-925 (DGRGISQAQTSAGTCETSLSTQP) are enriched in polar residues. Residues 927–947 (AGASRTGANATSTAASGSNSS) show a composition bias toward low complexity. Polar residues predominate over residues 959 to 968 (SNTTTHSAST).

It belongs to the FHIP family.

This chain is FHIP family protein CG3558, found in Drosophila melanogaster (Fruit fly).